The chain runs to 151 residues: MKTVMATGTFDIIHPGHGFFLEEARKLGGEDARLVVVLARDSTVRARKRTPIVGEKQRLEVVRMLKPVDEAYLGSETDMFEIVHRIKPDIIAIGPDQKFDVDELRDELRRRGLGCEVRRIEKYRDAELDSTCKIIKRIRSMEFDEDSLKNC.

ATP contacts are provided by residues 9–10 (TF), 14–17 (HPGH), aspartate 96, and tyrosine 123.

The protein belongs to the archaeal FAD synthase family. Homodimer. The cofactor is a divalent metal cation.

It catalyses the reaction FMN + ATP + H(+) = FAD + diphosphate. It participates in cofactor biosynthesis; FAD biosynthesis; FAD from FMN: step 1/1. Its function is as follows. Catalyzes the transfer of the AMP portion of ATP to flavin mononucleotide (FMN) to produce flavin adenine dinucleotide (FAD) coenzyme. The chain is FAD synthase from Methanothermobacter thermautotrophicus (strain ATCC 29096 / DSM 1053 / JCM 10044 / NBRC 100330 / Delta H) (Methanobacterium thermoautotrophicum).